A 954-amino-acid polypeptide reads, in one-letter code: Valine--tRNA ligase (954 aa).

A 'HIGH' region motif is present at residues 48-58 (PNVTGSLHMGH). Residues 560–564 (KMSKS) carry the 'KMSKS' region motif. Lysine 563 lines the ATP pocket. Residues 883–954 (AGFINKEAEL…QTQYQAIENL (72 aa)) adopt a coiled-coil conformation.

The protein belongs to the class-I aminoacyl-tRNA synthetase family. ValS type 1 subfamily. In terms of assembly, monomer.

Its subcellular location is the cytoplasm. It catalyses the reaction tRNA(Val) + L-valine + ATP = L-valyl-tRNA(Val) + AMP + diphosphate. Catalyzes the attachment of valine to tRNA(Val). As ValRS can inadvertently accommodate and process structurally similar amino acids such as threonine, to avoid such errors, it has a 'posttransfer' editing activity that hydrolyzes mischarged Thr-tRNA(Val) in a tRNA-dependent manner. This chain is Valine--tRNA ligase, found in Actinobacillus pleuropneumoniae serotype 5b (strain L20).